The chain runs to 185 residues: Threonylcarbamoyl-AMP synthase (185 aa).

A YrdC-like domain is found at M1 to G185.

Belongs to the SUA5 family. TsaC subfamily.

The protein resides in the cytoplasm. The enzyme catalyses L-threonine + hydrogencarbonate + ATP = L-threonylcarbamoyladenylate + diphosphate + H2O. Functionally, required for the formation of a threonylcarbamoyl group on adenosine at position 37 (t(6)A37) in tRNAs that read codons beginning with adenine. Catalyzes the conversion of L-threonine, HCO(3)(-)/CO(2) and ATP to give threonylcarbamoyl-AMP (TC-AMP) as the acyladenylate intermediate, with the release of diphosphate. This chain is Threonylcarbamoyl-AMP synthase, found in Aliivibrio fischeri (strain ATCC 700601 / ES114) (Vibrio fischeri).